The sequence spans 307 residues: Taste receptor type 2 member 41 (307 aa).

Over M1–A7 the chain is Extracellular. A helical membrane pass occupies residues F8–V28. Over L29–R40 the chain is Cytoplasmic. The chain crosses the membrane as a helical span at residues L41 to V61. Topologically, residues G62 to H88 are extracellular. The helical transmembrane segment at W89–V109 threads the bilayer. The Cytoplasmic segment spans residues K110–W129. The chain crosses the membrane as a helical span at residues V130 to W150. Residues V151–S183 lie on the Extracellular side of the membrane. The N-linked (GlcNAc...) asparagine glycan is linked to N167. A helical membrane pass occupies residues L184–I204. Topologically, residues N205 to K234 are cytoplasmic. Residues S235–T255 traverse the membrane as a helical segment. Topologically, residues K256–F264 are extracellular. The chain crosses the membrane as a helical span at residues Y265 to F285. At S286–A307 the chain is on the cytoplasmic side.

This sequence belongs to the G-protein coupled receptor T2R family.

It is found in the membrane. In terms of biological role, receptor that may play a role in the perception of bitterness and is gustducin-linked. May play a role in sensing the chemical composition of the gastrointestinal content. The activity of this receptor may stimulate alpha gustducin, mediate PLC-beta-2 activation and lead to the gating of TRPM5. The chain is Taste receptor type 2 member 41 (TAS2R41) from Pan paniscus (Pygmy chimpanzee).